A 94-amino-acid polypeptide reads, in one-letter code: Aspartyl/glutamyl-tRNA(Asn/Gln) amidotransferase subunit C (94 aa).

This sequence belongs to the GatC family. As to quaternary structure, heterotrimer of A, B and C subunits.

The enzyme catalyses L-glutamyl-tRNA(Gln) + L-glutamine + ATP + H2O = L-glutaminyl-tRNA(Gln) + L-glutamate + ADP + phosphate + H(+). It carries out the reaction L-aspartyl-tRNA(Asn) + L-glutamine + ATP + H2O = L-asparaginyl-tRNA(Asn) + L-glutamate + ADP + phosphate + 2 H(+). Allows the formation of correctly charged Asn-tRNA(Asn) or Gln-tRNA(Gln) through the transamidation of misacylated Asp-tRNA(Asn) or Glu-tRNA(Gln) in organisms which lack either or both of asparaginyl-tRNA or glutaminyl-tRNA synthetases. The reaction takes place in the presence of glutamine and ATP through an activated phospho-Asp-tRNA(Asn) or phospho-Glu-tRNA(Gln). The sequence is that of Aspartyl/glutamyl-tRNA(Asn/Gln) amidotransferase subunit C from Carboxydothermus hydrogenoformans (strain ATCC BAA-161 / DSM 6008 / Z-2901).